The primary structure comprises 310 residues: Protoheme IX farnesyltransferase 2 (310 aa).

Transmembrane regions (helical) follow at residues 25-45, 49-69, 98-118, 121-141, 145-165, 176-196, 222-242, 245-265, and 277-297; these read PGIIFGNLISVAGGFLLAAKG, LVLMLASLVGLSLVVASGCAI, HVLLFGIALGVLGFGILALFT, LALLFAAIGYVVYVGIYSLYM, SVYGTLVGSFSGAVPPVVGYC, VILLLMFSLWQMPHSYAIAIF, IVLYIAVFALVSTMLPLAGYT, AFMAVTCATSLWWLTMALKGY, and QVFGFSIITITALSVTMALDF.

The protein belongs to the UbiA prenyltransferase family. Protoheme IX farnesyltransferase subfamily.

The protein resides in the cell inner membrane. It catalyses the reaction heme b + (2E,6E)-farnesyl diphosphate + H2O = Fe(II)-heme o + diphosphate. The protein operates within porphyrin-containing compound metabolism; heme O biosynthesis; heme O from protoheme: step 1/1. In terms of biological role, converts heme B (protoheme IX) to heme O by substitution of the vinyl group on carbon 2 of heme B porphyrin ring with a hydroxyethyl farnesyl side group. This Shewanella sp. (strain MR-4) protein is Protoheme IX farnesyltransferase 2.